Reading from the N-terminus, the 107-residue chain is Ig kappa chain V-VI region NQ2-48.2.2 (107 aa).

The framework-1 stretch occupies residues 1 to 23 (QILLTQSPAIMSASPGQKVTMTC). Cysteines 23 and 87 form a disulfide. The tract at residues 24 to 33 (SASSSVSYMH) is complementarity-determining-1. The segment at 34–48 (WYQQKSGTSPKRWIY) is framework-2. Residues 49-55 (DTSKLAS) form a complementarity-determining-2 region. The framework-3 stretch occupies residues 56-87 (GVPARFSGSGSATSYSLTITSMQAEDAATYYC). The segment at 88 to 96 (QQWSSNPLT) is complementarity-determining-3. The interval 97–106 (FGAGTKLXLK) is framework-4.

Functionally, anti-2-phenyl oxazolone (PHOX) Antibody. The sequence is that of Ig kappa chain V-VI region NQ2-48.2.2 from Mus musculus (Mouse).